The sequence spans 436 residues: Serine/threonine-protein kinase STK11 (436 aa).

Serine 31 is subject to Phosphoserine. Lysine 44 and lysine 48 each carry N6-acetyllysine. The sufficient for interaction with SIRT1 stretch occupies residues 45–90; it reads LIGKYLMGDLLGEGSYGKVKEVLDSETLCRRAVKILKKKKLRRIPN. The Protein kinase domain occupies 49-309; sequence YLMGDLLGEG…IRQIRQHSWF (261 aa). ATP is bound by residues 55-63 and lysine 78; that span reads LGEGSYGKV. Lysine 96 and lysine 97 each carry N6-acetyllysine. The active-site Proton acceptor is aspartate 176. Threonine 189 bears the Phosphothreonine; by autocatalysis mark. Residues lysine 296 and lysine 311 each carry the N6-acetyllysine modification. Serine 325 bears the Phosphoserine mark. Threonine 336 is modified (phosphothreonine; by autocatalysis). Residue threonine 366 is modified to Phosphothreonine; by ATM and autocatalysis. The segment at 397 to 421 is disordered; the sequence is GTEPQLSSKVKPEGRPGAANPARKV. Residue serine 403 is modified to Phosphoserine. Residue lysine 420 is modified to N6-acetyllysine. A lipid anchor (S-palmitoyl cysteine) is attached at cysteine 422. Lysine 426 carries the post-translational modification N6-acetyllysine. Residue serine 431 is modified to Phosphoserine; by autocatalysis, PKA, PKC/PRKCZ and RPS6KA1. Residue cysteine 433 is modified to Cysteine methyl ester. A lipid anchor (S-farnesyl cysteine) is attached at cysteine 433. Lysine 434 is modified (N6-acetyllysine). A propeptide spans 434-436 (removed in mature form); it reads KQQ.

The protein belongs to the protein kinase superfamily. CAMK Ser/Thr protein kinase family. LKB1 subfamily. In terms of assembly, catalytic component of a trimeric complex composed of STK11/LKB1, STRAD (STRADA or STRADB) and CAB39/MO25 (CAB39/MO25alpha or CAB39L/MO25beta): the complex tethers STK11/LKB1 in the cytoplasm and stimulates its catalytic activity. Found in a ternary complex composed of SMAD4, STK11/LKB1 and STK11IP. Interacts with NR4A1, p53/TP53, SMAD4, STK11IP and WDR6. Interacts with NISCH; this interaction may increase STK11 activity. Interacts with SIRT1; the interaction deacetylates STK11. Interacts with CDKN1A. Requires Mg(2+) as cofactor. The cofactor is Mn(2+). Post-translationally, phosphorylated by ATM at Thr-366 following ionizing radiation (IR). Phosphorylation at Ser-431 by RPS6KA1 and/or some PKA is required to inhibit cell growth. Phosphorylation at Ser-431 is also required during neuronal polarization to mediate phosphorylation of BRSK1 and BRSK2. Phosphorylation by PKC/PRKCZ at Ser-397 in isoform 2 promotes metformin (or peroxynitrite)-induced nuclear export of STK11 and activation of AMPK. UV radiation -induced phosphorylation at Thr-366 mediates CDKN1A degradation. Acetylated. Deacetylation at Lys-48 enhances cytoplasmic localization and kinase activity in vitro. In terms of tissue distribution, expressed in brain, heart, testis, skeletal muscle and spleen, and weakly in liver and kidney. Isoform 1 is expressed at highest levels in the brain. Isoform 2 is expressed at highest levels in the testis, primarily in postmitotic developing germ cells (at protein level).

It localises to the nucleus. Its subcellular location is the cytoplasm. The protein resides in the membrane. It is found in the mitochondrion. The catalysed reaction is L-seryl-[protein] + ATP = O-phospho-L-seryl-[protein] + ADP + H(+). It catalyses the reaction L-threonyl-[protein] + ATP = O-phospho-L-threonyl-[protein] + ADP + H(+). Its activity is regulated as follows. Activated by forming a complex with STRAD (STRADA or STRADB) and CAB39/MO25 (CAB39/MO25alpha or CAB39L/MO25beta): STRADA (or STRADB)-binding promotes a conformational change of STK11/LKB1 in an active conformation, which is stabilized by CAB39/MO25alpha (or CAB39L/MO25beta) interacting with the STK11/LKB1 activation loop. Sequestration in the nucleus by NR4A1 prevents it from phosphorylating and activating cytoplasmic AMPK. Functionally, tumor suppressor serine/threonine-protein kinase that controls the activity of AMP-activated protein kinase (AMPK) family members, thereby playing a role in various processes such as cell metabolism, cell polarity, apoptosis and DNA damage response. Acts by phosphorylating the T-loop of AMPK family proteins, thus promoting their activity: phosphorylates PRKAA1, PRKAA2, BRSK1, BRSK2, MARK1, MARK2, MARK3, MARK4, NUAK1, NUAK2, SIK1, SIK2, SIK3 and SNRK but not MELK. Also phosphorylates non-AMPK family proteins such as STRADA, PTEN and possibly p53/TP53. Acts as a key upstream regulator of AMPK by mediating phosphorylation and activation of AMPK catalytic subunits PRKAA1 and PRKAA2 and thereby regulates processes including: inhibition of signaling pathways that promote cell growth and proliferation when energy levels are low, glucose homeostasis in liver, activation of autophagy when cells undergo nutrient deprivation, and B-cell differentiation in the germinal center in response to DNA damage. Also acts as a regulator of cellular polarity by remodeling the actin cytoskeleton. Required for cortical neuron polarization by mediating phosphorylation and activation of BRSK1 and BRSK2, leading to axon initiation and specification. Involved in DNA damage response: interacts with p53/TP53 and recruited to the CDKN1A/WAF1 promoter to participate in transcription activation. Able to phosphorylate p53/TP53; the relevance of such result in vivo is however unclear and phosphorylation may be indirect and mediated by downstream STK11/LKB1 kinase NUAK1. Also acts as a mediator of p53/TP53-dependent apoptosis via interaction with p53/TP53: translocates to the mitochondrion during apoptosis and regulates p53/TP53-dependent apoptosis pathways. Regulates UV radiation-induced DNA damage response mediated by CDKN1A. In association with NUAK1, phosphorylates CDKN1A in response to UV radiation and contributes to its degradation which is necessary for optimal DNA repair. Has a role in spermiogenesis. The chain is Serine/threonine-protein kinase STK11 from Rattus norvegicus (Rat).